We begin with the raw amino-acid sequence, 424 residues long: Isovaleryl-CoA dehydrogenase, mitochondrial (424 aa).

A mitochondrion-targeting transit peptide spans 1–30 (MATAVRLLGRRVSSWRLRPLPSPLAVPQRA). 3 positions are modified to N6-acetyllysine; alternate: K56, K65, and K76. N6-succinyllysine; alternate occurs at positions 56, 65, and 76. Residues 163-172 (LAMSEPNAGS) and 196-198 (WIT) contribute to the FAD site. Residue S172 participates in substrate binding. Residue 220–221 (SR) participates in substrate binding. K239 carries the N6-acetyllysine modification. K260 is modified (N6-acetyllysine; alternate). K260 carries the post-translational modification N6-succinyllysine; alternate. Substrate contacts are provided by residues Y275 and 282–285 (DLER). The Proton acceptor role is filled by E284. Residue R310 participates in FAD binding. Residue K316 is modified to N6-succinyllysine. FAD contacts are provided by residues Q321 and 378-382 (QCLGG). 405–406 (GG) contacts substrate. 407–409 (TSE) is an FAD binding site.

This sequence belongs to the acyl-CoA dehydrogenase family. In terms of assembly, homotetramer. It depends on FAD as a cofactor.

It localises to the mitochondrion matrix. The enzyme catalyses 3-methylbutanoyl-CoA + oxidized [electron-transfer flavoprotein] + H(+) = 3-methylbut-2-enoyl-CoA + reduced [electron-transfer flavoprotein]. The catalysed reaction is pentanoyl-CoA + oxidized [electron-transfer flavoprotein] + H(+) = (2E)-pentenoyl-CoA + reduced [electron-transfer flavoprotein]. It carries out the reaction hexanoyl-CoA + oxidized [electron-transfer flavoprotein] + H(+) = (2E)-hexenoyl-CoA + reduced [electron-transfer flavoprotein]. It catalyses the reaction butanoyl-CoA + oxidized [electron-transfer flavoprotein] + H(+) = (2E)-butenoyl-CoA + reduced [electron-transfer flavoprotein]. The protein operates within amino-acid degradation; L-leucine degradation; (S)-3-hydroxy-3-methylglutaryl-CoA from 3-isovaleryl-CoA: step 1/3. Functionally, catalyzes the conversion of isovaleryl-CoA/3-methylbutanoyl-CoA to 3-methylbut-2-enoyl-CoA as an intermediate step in the leucine (Leu) catabolic pathway. To a lesser extent, is also able to catalyze the oxidation of other saturated short-chain acyl-CoA thioesters as pentanoyl-CoA, hexenoyl-CoA and butenoyl-CoA. The protein is Isovaleryl-CoA dehydrogenase, mitochondrial (Ivd) of Rattus norvegicus (Rat).